A 349-amino-acid polypeptide reads, in one-letter code: Phosphoribosylformylglycinamidine cyclo-ligase (349 aa).

The protein belongs to the AIR synthase family.

Its subcellular location is the cytoplasm. It carries out the reaction 2-formamido-N(1)-(5-O-phospho-beta-D-ribosyl)acetamidine + ATP = 5-amino-1-(5-phospho-beta-D-ribosyl)imidazole + ADP + phosphate + H(+). It participates in purine metabolism; IMP biosynthesis via de novo pathway; 5-amino-1-(5-phospho-D-ribosyl)imidazole from N(2)-formyl-N(1)-(5-phospho-D-ribosyl)glycinamide: step 2/2. The protein is Phosphoribosylformylglycinamidine cyclo-ligase of Methanococcus maripaludis (strain C6 / ATCC BAA-1332).